Consider the following 193-residue polypeptide: Holliday junction branch migration complex subunit RuvA (193 aa).

The domain I stretch occupies residues 1–63 (MIAHIQGKLV…EDSHSLYGFA (63 aa)). Residues 64–142 (EKSEKEIFKL…KLYDLDQVSI (79 aa)) are domain II. Positions 143-145 (SQS) are flexible linker. The tract at residues 145 to 193 (SNTNKDEALSALEVLGFIRKSAEKVVEKIVATMPDATVETIIKQALKNL) is domain III.

It belongs to the RuvA family. Homotetramer. Forms an RuvA(8)-RuvB(12)-Holliday junction (HJ) complex. HJ DNA is sandwiched between 2 RuvA tetramers; dsDNA enters through RuvA and exits via RuvB. An RuvB hexamer assembles on each DNA strand where it exits the tetramer. Each RuvB hexamer is contacted by two RuvA subunits (via domain III) on 2 adjacent RuvB subunits; this complex drives branch migration. In the full resolvosome a probable DNA-RuvA(4)-RuvB(12)-RuvC(2) complex forms which resolves the HJ.

It is found in the cytoplasm. Functionally, the RuvA-RuvB-RuvC complex processes Holliday junction (HJ) DNA during genetic recombination and DNA repair, while the RuvA-RuvB complex plays an important role in the rescue of blocked DNA replication forks via replication fork reversal (RFR). RuvA specifically binds to HJ cruciform DNA, conferring on it an open structure. The RuvB hexamer acts as an ATP-dependent pump, pulling dsDNA into and through the RuvAB complex. HJ branch migration allows RuvC to scan DNA until it finds its consensus sequence, where it cleaves and resolves the cruciform DNA. In Flavobacterium psychrophilum (strain ATCC 49511 / DSM 21280 / CIP 103535 / JIP02/86), this protein is Holliday junction branch migration complex subunit RuvA.